The chain runs to 79 residues: Small ribosomal subunit protein bS18 (79 aa).

It belongs to the bacterial ribosomal protein bS18 family. Part of the 30S ribosomal subunit. Forms a tight heterodimer with protein bS6.

In terms of biological role, binds as a heterodimer with protein bS6 to the central domain of the 16S rRNA, where it helps stabilize the platform of the 30S subunit. The protein is Small ribosomal subunit protein bS18 of Bacillus licheniformis (strain ATCC 14580 / DSM 13 / JCM 2505 / CCUG 7422 / NBRC 12200 / NCIMB 9375 / NCTC 10341 / NRRL NRS-1264 / Gibson 46).